The chain runs to 443 residues: Putative metabolite transport protein YaaU (443 aa).

Over 1-18 (MQPSRNFDDLKFSSIHRR) the chain is Cytoplasmic. Residues 19–39 (ILLWGSGGPFLDGYVLVMIGV) traverse the membrane as a helical segment. Residues 40 to 53 (ALEQLTPALKLDAD) lie on the Periplasmic side of the membrane. A helical membrane pass occupies residues 54 to 74 (WIGLLGAGTLAGLFVGTSLFG). At 75-84 (YISDKVGRRK) the chain is on the cytoplasmic side. Residues 85–105 (MFLIDIIAIGVISVATMFVSS) traverse the membrane as a helical segment. The Periplasmic segment spans residues 106-113 (PVELLVMR). The helical transmembrane segment at 114–134 (VLIGIVIGADYPIATSMITEF) threads the bilayer. Residues 135–145 (SSTRQRAFSIS) are Cytoplasmic-facing. The chain crosses the membrane as a helical span at residues 146-166 (FIAAMWYVGATCADLVGYWLY). Residues 167-173 (DVEGGWR) lie on the Periplasmic side of the membrane. A helical membrane pass occupies residues 174–194 (WMLGSAAIPCLLILIGRFELP). Residues 195–241 (ESPRWLLRKGRVKECEEMMIKLFGEPVAFDEEQPQQTRFRDLFNRRH) lie on the Cytoplasmic side of the membrane. The chain crosses the membrane as a helical span at residues 242–262 (FPFVLFVAAIWTCQVIPMFAI). Residues 263–282 (YTFGPQIVGLLGLGVGKNAA) are Periplasmic-facing. A helical membrane pass occupies residues 283-303 (LGNVVISLFFMLGCIPPMLWL). The Cytoplasmic portion of the chain corresponds to 304-309 (NTAGRR). Residues 310-329 (PLLIGSFAMMTLALAVLGLI) traverse the membrane as a helical segment. The Periplasmic portion of the chain corresponds to 330–334 (PDMGI). Residues 335-357 (WLVVMAFAVYAFFSGGPGNLQWL) form a helical membrane-spanning segment. Residues 358–373 (YPNELFPTDIRASAVG) are Cytoplasmic-facing. The chain crosses the membrane as a helical span at residues 374–394 (VIMSLSRIGTIVSTWALPIFI). The Periplasmic segment spans residues 395 to 401 (NNYGISN). A helical membrane pass occupies residues 402–422 (TMLMGAGISLFGLLISVAFAP). The Cytoplasmic segment spans residues 423–443 (ETRGMSLAQTSNMTIRGQRMG).

It belongs to the major facilitator superfamily. Sugar transporter (TC 2.A.1.1) family.

It is found in the cell inner membrane. The polypeptide is Putative metabolite transport protein YaaU (yaaU) (Escherichia coli (strain K12)).